A 223-amino-acid chain; its full sequence is Cytidylate kinase (223 aa).

12–20 (GPAGSGKST) lines the ATP pocket.

This sequence belongs to the cytidylate kinase family. Type 1 subfamily.

The protein localises to the cytoplasm. The catalysed reaction is CMP + ATP = CDP + ADP. The enzyme catalyses dCMP + ATP = dCDP + ADP. This chain is Cytidylate kinase, found in Aster yellows witches'-broom phytoplasma (strain AYWB).